A 131-amino-acid polypeptide reads, in one-letter code: Large ribosomal subunit protein bL12 (131 aa).

A compositionally biased stretch (basic and acidic residues) spans 99-125 (ESTPKPIKEGTNKDDAEETKKKLEEAG). Positions 99–131 (ESTPKPIKEGTNKDDAEETKKKLEEAGAKVTVK) are disordered.

It belongs to the bacterial ribosomal protein bL12 family. Homodimer. Part of the ribosomal stalk of the 50S ribosomal subunit. Forms a multimeric L10(L12)X complex, where L10 forms an elongated spine to which 2 to 4 L12 dimers bind in a sequential fashion. Binds GTP-bound translation factors.

Forms part of the ribosomal stalk which helps the ribosome interact with GTP-bound translation factors. Is thus essential for accurate translation. The polypeptide is Large ribosomal subunit protein bL12 (Gloeothece citriformis (strain PCC 7424) (Cyanothece sp. (strain PCC 7424))).